Here is a 484-residue protein sequence, read N- to C-terminus: Aspartyl/glutamyl-tRNA(Asn/Gln) amidotransferase subunit B (484 aa).

It belongs to the GatB/GatE family. GatB subfamily. Heterotrimer of A, B and C subunits.

The enzyme catalyses L-glutamyl-tRNA(Gln) + L-glutamine + ATP + H2O = L-glutaminyl-tRNA(Gln) + L-glutamate + ADP + phosphate + H(+). The catalysed reaction is L-aspartyl-tRNA(Asn) + L-glutamine + ATP + H2O = L-asparaginyl-tRNA(Asn) + L-glutamate + ADP + phosphate + 2 H(+). Functionally, allows the formation of correctly charged Asn-tRNA(Asn) or Gln-tRNA(Gln) through the transamidation of misacylated Asp-tRNA(Asn) or Glu-tRNA(Gln) in organisms which lack either or both of asparaginyl-tRNA or glutaminyl-tRNA synthetases. The reaction takes place in the presence of glutamine and ATP through an activated phospho-Asp-tRNA(Asn) or phospho-Glu-tRNA(Gln). The sequence is that of Aspartyl/glutamyl-tRNA(Asn/Gln) amidotransferase subunit B from Bordetella parapertussis (strain 12822 / ATCC BAA-587 / NCTC 13253).